Reading from the N-terminus, the 168-residue chain is Signal peptidase I V (168 aa).

Residues 1 to 6 (MKKRFW) lie on the Cytoplasmic side of the membrane. The helical transmembrane segment at 7–26 (FLAGVVSVVLAIQVKNAVFI) threads the bilayer. Residues 27 to 168 (DYKVEGVSMN…NIVGVISDAE (142 aa)) lie on the Extracellular side of the membrane. Catalysis depends on residues S34 and K75.

This sequence belongs to the peptidase S26 family.

Its subcellular location is the cell membrane. It catalyses the reaction Cleavage of hydrophobic, N-terminal signal or leader sequences from secreted and periplasmic proteins.. This is Signal peptidase I V (sipV) from Bacillus subtilis (strain 168).